Reading from the N-terminus, the 500-residue chain is L-arabinose isomerase (500 aa).

E306, E333, H350, and H450 together coordinate Mn(2+).

This sequence belongs to the arabinose isomerase family. In terms of assembly, homohexamer. It depends on Mn(2+) as a cofactor.

The catalysed reaction is beta-L-arabinopyranose = L-ribulose. The protein operates within carbohydrate degradation; L-arabinose degradation via L-ribulose; D-xylulose 5-phosphate from L-arabinose (bacterial route): step 1/3. Its function is as follows. Catalyzes the conversion of L-arabinose to L-ribulose. The chain is L-arabinose isomerase from Shigella flexneri.